We begin with the raw amino-acid sequence, 437 residues long: Enolase (437 aa).

Residue Gln162 coordinates (2R)-2-phosphoglycerate. Catalysis depends on Glu204, which acts as the Proton donor. Mg(2+)-binding residues include Asp251, Glu297, and Asp324. Residues Lys349, Arg378, Ser379, and Lys400 each contribute to the (2R)-2-phosphoglycerate site. Lys349 (proton acceptor) is an active-site residue.

It belongs to the enolase family. The cofactor is Mg(2+).

The protein localises to the cytoplasm. The protein resides in the secreted. It localises to the cell surface. It catalyses the reaction (2R)-2-phosphoglycerate = phosphoenolpyruvate + H2O. Its pathway is carbohydrate degradation; glycolysis; pyruvate from D-glyceraldehyde 3-phosphate: step 4/5. Functionally, catalyzes the reversible conversion of 2-phosphoglycerate (2-PG) into phosphoenolpyruvate (PEP). It is essential for the degradation of carbohydrates via glycolysis. The protein is Enolase of Chlorobium phaeovibrioides (strain DSM 265 / 1930) (Prosthecochloris vibrioformis (strain DSM 265)).